We begin with the raw amino-acid sequence, 1585 residues long: Sterol 3-beta-glucosyltransferase (1585 aa).

The span at 1–18 (MSPPISPTPPPLQPPFPP) shows a compositional bias: pro residues. Disordered regions lie at residues 1–154 (MSPP…CDFR), 177–225 (PWEE…PTHT), and 249–279 (YQYA…LPKG). 3 stretches are compositionally biased toward polar residues: residues 65–77 (DQAT…SLIP), 105–123 (DAQT…STHE), and 132–148 (PRTS…QMAE). Positions 178-194 (WEEDDDSDDGEDDDEFI) are enriched in acidic residues. The segment covering 255 to 273 (ETSSRRTSAAGSESSSEGE) has biased composition (low complexity). One can recognise a GRAM 1 domain in the interval 387 to 555 (ERLMEVFGLE…EAIVDVEKSP (169 aa)). In terms of domain architecture, PH spans 438–530 (LLVKSGPLHK…WVKAIQKVMF (93 aa)). 2 disordered regions span residues 625–645 (TSHA…LGMA) and 666–852 (DGEP…GSES). Over residues 670 to 689 (LEEHSQGPHHNDEDASHLPH) the composition is skewed to basic and acidic residues. 3 stretches are compositionally biased toward polar residues: residues 760-785 (TDSS…QASV), 806-817 (NKPSVVDSNSAE), and 827-840 (SWTS…QMVK). The region spanning 862–933 (RKFRTFFALS…RDLYGLKAQK (72 aa)) is the GRAM 2 domain. UDP-alpha-D-glucose contacts are provided by S1043, R1044, D1046, I1358, H1360, H1373, G1377, T1378, D1397, and Q1398. The interval 1499–1555 (NRVRSRSRSRSRSSQGRFSPRRHTVDDDGWSVVSGGSRSRSGSASAVTSPERRPLNI) is disordered. Low complexity predominate over residues 1529-1545 (SVVSGGSRSRSGSASAV).

It belongs to the glycosyltransferase 28 family.

Its subcellular location is the cytoplasm. The protein resides in the membrane. It carries out the reaction a sterol + UDP-alpha-D-glucose = a sterol 3-beta-D-glucoside + UDP + H(+). The catalysed reaction is ergosterol + UDP-alpha-D-glucose = ergosteryl 3-beta-D-glucoside + UDP + H(+). Functionally, sterol glycosyltransferase responsible for the glycosylation of ergosterol to form ergosterol-glucoside. The sequence is that of Sterol 3-beta-glucosyltransferase from Cryptococcus neoformans var. neoformans serotype D (strain JEC21 / ATCC MYA-565) (Filobasidiella neoformans).